The chain runs to 140 residues: Putative pre-16S rRNA nuclease (140 aa).

This sequence belongs to the YqgF nuclease family.

It localises to the cytoplasm. Its function is as follows. Could be a nuclease involved in processing of the 5'-end of pre-16S rRNA. This is Putative pre-16S rRNA nuclease from Aeromonas salmonicida (strain A449).